The primary structure comprises 1202 residues: Probable DNA polymerase (1202 aa).

This sequence belongs to the DNA polymerase type-B family.

It is found in the mitochondrion. It carries out the reaction DNA(n) + a 2'-deoxyribonucleoside 5'-triphosphate = DNA(n+1) + diphosphate. This is Probable DNA polymerase from Ascobolus immersus.